Here is a 474-residue protein sequence, read N- to C-terminus: Trigger factor (474 aa).

The PPIase FKBP-type domain occupies 171 to 258; it reads GDVAVIDFQG…LKELKTRDLP (88 aa). Residues 441–474 are disordered; it reads TEVDAASATVETTATETAEEAPEAPKAKKGKKKA. Over residues 444–456 the composition is skewed to low complexity; that stretch reads DAASATVETTATE.

This sequence belongs to the FKBP-type PPIase family. Tig subfamily.

Its subcellular location is the cytoplasm. The enzyme catalyses [protein]-peptidylproline (omega=180) = [protein]-peptidylproline (omega=0). Its function is as follows. Involved in protein export. Acts as a chaperone by maintaining the newly synthesized protein in an open conformation. Functions as a peptidyl-prolyl cis-trans isomerase. This is Trigger factor from Synechococcus sp. (strain ATCC 27144 / PCC 6301 / SAUG 1402/1) (Anacystis nidulans).